A 302-amino-acid chain; its full sequence is MYRELISHKIAELKKERKAIILAHNYQLGEIQDAADFVGDSLELARKAAKVDAGVIVFCGVHFMAETAAILSPEKIVLAPEPRAGCPMADMISGAELREFKSRHPGLPVVCYVNSTAEVKAESDICCTSANAVKVVESLKSDTVLFVPDQYLGAFVKERTSKKIISWPGYCPSHARIKPEDIVNLKKHYPAARVIVHPESRPEVTALADEVLSTGQMVSYATRADVKELIVGTEIGMLYRLRKENPDKLFIPVSEQAVCANMKMTTLPKLLASLENMQTVVSVPEEIRVKAVGAVERMLRVV.

Iminosuccinate is bound by residues H24 and S41. [4Fe-4S] cluster is bound at residue C86. Residues 112-114 (YVN) and S129 contribute to the iminosuccinate site. C171 lines the [4Fe-4S] cluster pocket. Iminosuccinate-binding positions include 197–199 (HPE) and T214. A [4Fe-4S] cluster-binding site is contributed by C259.

This sequence belongs to the quinolinate synthase family. Type 2 subfamily. [4Fe-4S] cluster serves as cofactor.

It localises to the cytoplasm. It catalyses the reaction iminosuccinate + dihydroxyacetone phosphate = quinolinate + phosphate + 2 H2O + H(+). The protein operates within cofactor biosynthesis; NAD(+) biosynthesis; quinolinate from iminoaspartate: step 1/1. Functionally, catalyzes the condensation of iminoaspartate with dihydroxyacetone phosphate to form quinolinate. The chain is Quinolinate synthase from Dehalococcoides mccartyi (strain ATCC BAA-2100 / JCM 16839 / KCTC 5957 / BAV1).